The primary structure comprises 343 residues: NAD-dependent deacetylase sir2E (343 aa).

The region spanning Y27–E300 is the Deacetylase sirtuin-type domain. H152 (proton acceptor) is an active-site residue. Zn(2+)-binding residues include C160, C165, C200, and C203.

Belongs to the sirtuin family.

Its subcellular location is the nucleus. It carries out the reaction N(6)-acetyl-L-lysyl-[protein] + NAD(+) + H2O = 2''-O-acetyl-ADP-D-ribose + nicotinamide + L-lysyl-[protein]. NAD-dependent deacetylase, which plays an important role in the regulation of transcriptional repression. May play a role in cell cycle. When overexpressed, the cell cycle is accelerated. This Dictyostelium discoideum (Social amoeba) protein is NAD-dependent deacetylase sir2E (sir2E).